The primary structure comprises 816 residues: Phosphatidylinositol 4-kinase beta (816 aa).

Residues 1-30 (MGDTVVEPAPLKPTSEPTSGPPGNNGGSLL) form a disordered region. G2 is modified (N-acetylglycine). The 214-residue stretch at 29–242 (LLSVITEGVG…GTKLRKLILS (214 aa)) folds into the PIK helical domain. The segment at 41 to 67 (SVIDPEVAQKACQEVLEKVKLLHGGVA) is interaction with ACBD3. Disordered regions lie at residues 101 to 120 (EDEM…RRRR) and 248 to 318 (AHRK…SFSS). The residue at position 258 (S258) is a Phosphoserine. At T263 the chain carries Phosphothreonine. Residues S266, S275, S277, S284, and S294 each carry the phosphoserine modification. Composition is skewed to polar residues over residues 278–297 (DATA…SNPK) and 306–318 (SSST…SFSS). At S428 the chain carries Phosphoserine. T438 carries the phosphothreonine modification. The residue at position 511 (S511) is a Phosphoserine. Residues T517 and T519 each carry the phosphothreonine modification. One can recognise a PI3K/PI4K catalytic domain in the interval 535-801 (EPWQEKVRRI…MVDGSMRSIT (267 aa)). Positions 541–547 (VRRIREG) are G-loop. A catalytic loop region spans residues 668–676 (QVKDRHNGN). The activation loop stretch occupies residues 687-711 (HIDFGFILSSSPRNLGFETSAFKLT).

The protein belongs to the PI3/PI4-kinase family. Type III PI4K subfamily. Interacts with ARF1 and ARF3 in the Golgi complex, but not with ARF4, ARF5 or ARF6. Interacts with NCS1/FREQ in a calcium-independent manner. Interacts with CALN1/CABP8 and CALN2/CABP7; in a calcium-dependent manner; this interaction competes with NCS1/FREQ binding. Interacts with ACBD3. Interacts with ARMH3, YWHAB, YWHAE, YWHAG, YWHAH, YWHAQ, YWHAZ and SFN. Interacts with GGA2 (via VHS domain); the interaction is important for PI4KB location at the Golgi apparatus membrane. Interacts with ATG9A. In terms of assembly, (Microbial infection) Interacts with Aichi virus protein 3A. Part of a complex Aichi virus protein 3A/ACBD3/PI4KB that allows the synthesis of PI4P at the viral RNA replication sites. Mg(2+) is required as a cofactor. It depends on Mn(2+) as a cofactor. In terms of tissue distribution, widely expressed with highest levels in heart, skeletal muscle, pancreas, testis and ovary. Weakly expressed in liver. Expressed in the innear ear in the epithelium of the spinal organ of corti.

It localises to the endomembrane system. The protein resides in the mitochondrion outer membrane. It is found in the rough endoplasmic reticulum membrane. The protein localises to the golgi apparatus. Its subcellular location is the golgi apparatus membrane. It localises to the cytoplasm. The protein resides in the perinuclear region. It carries out the reaction a 1,2-diacyl-sn-glycero-3-phospho-(1D-myo-inositol) + ATP = a 1,2-diacyl-sn-glycero-3-phospho-(1D-myo-inositol 4-phosphate) + ADP + H(+). Inhibited by wortmannin and adenosine. Increased kinase activity upon interaction with NCS1/FREQ. With respect to regulation, (Microbial infection) Activated by Aichi virus protein 3A, this activation is sensitized by ACBD3. Functionally, phosphorylates phosphatidylinositol (PI) in the first committed step in the production of the second messenger inositol-1,4,5,-trisphosphate (PIP). May regulate Golgi disintegration/reorganization during mitosis, possibly via its phosphorylation. Involved in Golgi-to-plasma membrane trafficking. May play an important role in the inner ear development. Its function is as follows. (Microbial infection) Plays an essential role in Aichi virus RNA replication. Recruited by ACBD3 at the viral replication sites. (Microbial infection) Required for cellular spike-mediated entry of human coronavirus SARS-CoV. The protein is Phosphatidylinositol 4-kinase beta of Homo sapiens (Human).